The following is a 153-amino-acid chain: Putative WASP homolog-associated protein with actin, membranes and microtubules-like protein 1 (153 aa).

Residues 113 to 151 adopt a coiled-coil conformation; it reads AIQFYEIQLELYEVKFEILKNKEILLTTQLDSLERLIKD.

This Homo sapiens (Human) protein is Putative WASP homolog-associated protein with actin, membranes and microtubules-like protein 1 (WHAMMP3).